The following is a 176-amino-acid chain: Ferritin, spleen middle subunit (176 aa).

A Ferritin-like diiron domain is found at 7–156 (QNYHRDCEAA…DFITNLSRMD (150 aa)). Residues glutamate 24, glutamate 59, histidine 62, glutamate 104, and glutamine 138 each coordinate Fe cation.

The protein belongs to the ferritin family. As to quaternary structure, in spleen, forms a homomer. The functional molecule forms a roughly spherical shell with a diameter of 12 nm and contains a central cavity into which the insoluble mineral iron core is deposited. Spleen (at protein level).

It catalyses the reaction 4 Fe(2+) + O2 + 4 H(+) = 4 Fe(3+) + 2 H2O. Stores iron in a soluble, non-toxic, readily available form. Important for iron homeostasis. Has ferroxidase activity. Iron is taken up in the ferrous form and deposited as ferric hydroxides after oxidation. The chain is Ferritin, spleen middle subunit from Trematomus bernacchii (Emerald rockcod).